A 109-amino-acid polypeptide reads, in one-letter code: Ferredoxin CarAc (109 aa).

Residues 3-108 enclose the 2Fe-2S ferredoxin-type domain; it reads AKVRVIFRAA…GLTLELPKAQ (106 aa). Residues C43, C49, C52, and C89 each coordinate [2Fe-2S] cluster.

Belongs to the adrenodoxin/putidaredoxin family. As to quaternary structure, monomer. Carbazole 1,9a-dioxygenase complex consists of a terminal oxygenase component CarAa, a ferredoxin reductase component fdr and a ferredoxin component CarAc. [2Fe-2S] cluster serves as cofactor.

Functionally, part of the multicomponent carbazole 1,9a-dioxygenase (CARDO), that converts carbazole (CAR) into 2-aminobiphenyl-2,3-diol. Acts as a mediator in the electron transfer from fdr to CarAa. This is Ferredoxin CarAc (carAc) from Sphingomonas sp.